Here is a 227-residue protein sequence, read N- to C-terminus: Hydroxylase/desaturase asaB (227 aa).

The protein belongs to the asaB hydroxylase/desaturase family.

It participates in secondary metabolite biosynthesis. In terms of biological role, hydroxylase/desaturase; part of the gene cluster that mediates the biosynthesis of aspergillic acid, a hydroxamic acid-containing pyrazinone with aliphatic side chains that originates from leucine (Leu) and isoleucine (Ile). Aspergillic acid has antibiotic properties and was shown to be lethal to mice. The first step in the pathway is the production of deoxyaspergillic acid via a condensation between the Ile amine and the Leu carboxylic acid, followed by a reductive release from the protein forming the dipeptide aldehyde NH(2)-Leu-Ile-CHO, which could undergo an intermolecular cyclization resulting in a dihydropyrazinone. As the NRPS asaC lacks a condensation domain, it is improbable that it is responsible for condensation of Leu and Ile. One possibility is that asaC acts on a previously condensed dipeptide and functions as a Leu-Ile reductase to yield deoxyaspergillic acid. After asaC forms deoxyaspergillic acid, the cytochrome P450 asaD oxidizes the pyrazinone to the hydroxamic acid-containing bioactive metabolite aspergillic acid. The hydroxylase/desaturase asaB can then convert aspergillic acid to hydroxyaspergillic acid. Both aspergillic acid and hydroxyaspergillic acid can form complexes with iron producing ferriaspergillin analogs. In Aspergillus flavus (strain ATCC 200026 / FGSC A1120 / IAM 13836 / NRRL 3357 / JCM 12722 / SRRC 167), this protein is Hydroxylase/desaturase asaB.